Reading from the N-terminus, the 331-residue chain is Phenylalanine--tRNA ligase alpha subunit (331 aa).

Glu252 contributes to the Mg(2+) binding site.

It belongs to the class-II aminoacyl-tRNA synthetase family. Phe-tRNA synthetase alpha subunit type 1 subfamily. In terms of assembly, tetramer of two alpha and two beta subunits. The cofactor is Mg(2+).

It localises to the cytoplasm. It carries out the reaction tRNA(Phe) + L-phenylalanine + ATP = L-phenylalanyl-tRNA(Phe) + AMP + diphosphate + H(+). In Xanthomonas euvesicatoria pv. vesicatoria (strain 85-10) (Xanthomonas campestris pv. vesicatoria), this protein is Phenylalanine--tRNA ligase alpha subunit.